A 202-amino-acid polypeptide reads, in one-letter code: Holliday junction branch migration complex subunit RuvA (202 aa).

Residues 1–64 (MISRLRGTVL…EDAFDLFGFL (64 aa)) are domain I. The tract at residues 65 to 143 (TKGEEEVFLL…TIHLEAVSRG (79 aa)) is domain II. The interval 143-147 (GTAPA) is flexible linker. Residues 148 to 202 (AVSGAHADLVSALLNLGYKQPQAEKAADLASERLGAEATFQALFREALKALRSGG) form a domain III region.

It belongs to the RuvA family. As to quaternary structure, homotetramer. Forms an RuvA(8)-RuvB(12)-Holliday junction (HJ) complex. HJ DNA is sandwiched between 2 RuvA tetramers; dsDNA enters through RuvA and exits via RuvB. An RuvB hexamer assembles on each DNA strand where it exits the tetramer. Each RuvB hexamer is contacted by two RuvA subunits (via domain III) on 2 adjacent RuvB subunits; this complex drives branch migration. In the full resolvosome a probable DNA-RuvA(4)-RuvB(12)-RuvC(2) complex forms which resolves the HJ.

It is found in the cytoplasm. In terms of biological role, the RuvA-RuvB-RuvC complex processes Holliday junction (HJ) DNA during genetic recombination and DNA repair, while the RuvA-RuvB complex plays an important role in the rescue of blocked DNA replication forks via replication fork reversal (RFR). RuvA specifically binds to HJ cruciform DNA, conferring on it an open structure. The RuvB hexamer acts as an ATP-dependent pump, pulling dsDNA into and through the RuvAB complex. HJ branch migration allows RuvC to scan DNA until it finds its consensus sequence, where it cleaves and resolves the cruciform DNA. This chain is Holliday junction branch migration complex subunit RuvA, found in Myxococcus xanthus (strain DK1622).